Consider the following 79-residue polypeptide: Short neurotoxin 3 (79 aa).

Residues 1–21 (MKTLLLTLVMVTIMCLDLGYT) form the signal peptide. Cystine bridges form between Cys-24–Cys-41, Cys-34–Cys-59, Cys-63–Cys-71, and Cys-72–Cys-77.

Belongs to the three-finger toxin family. Short-chain subfamily. Type III alpha-neurotoxin sub-subfamily. In terms of tissue distribution, expressed by the venom gland.

The protein localises to the secreted. Its function is as follows. Binds with high affinity to muscle nicotinic acetylcholine receptor (nAChR) and hinders acetylcholine binding to the receptor, thereby impairing neuromuscular transmission. Competes with the binding of alpha-bungarotoxin on muscle AChR (from Torpedo) with an IC(50) of 0.30 uM. Causes muscle paralysis, spasms and increased respiration. This Pseudonaja textilis (Eastern brown snake) protein is Short neurotoxin 3.